A 282-amino-acid chain; its full sequence is Acetyl-coenzyme A carboxylase carboxyl transferase subunit beta (282 aa).

Positions 26–282 (QWVKCPETGE…IIRLLNLLME (257 aa)) constitute a CoA carboxyltransferase N-terminal domain.

Belongs to the AccD/PCCB family. As to quaternary structure, acetyl-CoA carboxylase is a heterohexamer composed of biotin carboxyl carrier protein (AccB), biotin carboxylase (AccC) and two subunits each of ACCase subunit alpha (AccA) and ACCase subunit beta (AccD).

It localises to the cytoplasm. It catalyses the reaction N(6)-carboxybiotinyl-L-lysyl-[protein] + acetyl-CoA = N(6)-biotinyl-L-lysyl-[protein] + malonyl-CoA. It functions in the pathway lipid metabolism; malonyl-CoA biosynthesis; malonyl-CoA from acetyl-CoA: step 1/1. Component of the acetyl coenzyme A carboxylase (ACC) complex. Biotin carboxylase (BC) catalyzes the carboxylation of biotin on its carrier protein (BCCP) and then the CO(2) group is transferred by the transcarboxylase to acetyl-CoA to form malonyl-CoA. The sequence is that of Acetyl-coenzyme A carboxylase carboxyl transferase subunit beta from Salinibacter ruber (strain DSM 13855 / M31).